The following is a 403-amino-acid chain: Protein LAZ1 homolog 2 (403 aa).

6 consecutive transmembrane segments (helical) span residues 16-36 (SLII…YSIL), 50-70 (WIVS…ISLS), 162-182 (MILK…GVYG), 191-211 (GYPY…FCLV), 236-256 (IVFA…YGIL), and 269-289 (FLIC…FPAE). The disordered stretch occupies residues 381 to 403 (SDGKEETEVTEEVTVETSVPPKE).

The protein belongs to the TMEM184 family.

The protein resides in the membrane. The chain is Protein LAZ1 homolog 2 from Arabidopsis thaliana (Mouse-ear cress).